A 156-amino-acid chain; its full sequence is D-aminoacyl-tRNA deacylase (156 aa).

The Gly-cisPro motif, important for rejection of L-amino acids signature appears at 142-143 (GP).

The protein belongs to the DTD family. In terms of assembly, homodimer.

The protein localises to the cytoplasm. It carries out the reaction glycyl-tRNA(Ala) + H2O = tRNA(Ala) + glycine + H(+). It catalyses the reaction a D-aminoacyl-tRNA + H2O = a tRNA + a D-alpha-amino acid + H(+). In terms of biological role, an aminoacyl-tRNA editing enzyme that deacylates mischarged D-aminoacyl-tRNAs. Also deacylates mischarged glycyl-tRNA(Ala), protecting cells against glycine mischarging by AlaRS. Acts via tRNA-based rather than protein-based catalysis; rejects L-amino acids rather than detecting D-amino acids in the active site. By recycling D-aminoacyl-tRNA to D-amino acids and free tRNA molecules, this enzyme counteracts the toxicity associated with the formation of D-aminoacyl-tRNA entities in vivo and helps enforce protein L-homochirality. This is D-aminoacyl-tRNA deacylase from Delftia acidovorans (strain DSM 14801 / SPH-1).